Reading from the N-terminus, the 366-residue chain is tRNA(Met) cytidine acetate ligase (366 aa).

ATP-binding positions include 7–20 (IAEF…HQYL), Gly-96, Asn-152, and Arg-175.

This sequence belongs to the TmcAL family.

It is found in the cytoplasm. It catalyses the reaction cytidine(34) in elongator tRNA(Met) + acetate + ATP = N(4)-acetylcytidine(34) in elongator tRNA(Met) + AMP + diphosphate. In terms of biological role, catalyzes the formation of N(4)-acetylcytidine (ac(4)C) at the wobble position of elongator tRNA(Met), using acetate and ATP as substrates. First activates an acetate ion to form acetyladenylate (Ac-AMP) and then transfers the acetyl group to tRNA to form ac(4)C34. The protein is tRNA(Met) cytidine acetate ligase of Streptococcus equi subsp. zooepidemicus (strain MGCS10565).